The following is a 381-amino-acid chain: Acetylornithine deacetylase (381 aa).

H79 contributes to the Zn(2+) binding site. D81 is an active-site residue. D111 lines the Zn(2+) pocket. The active site involves E143. Residues E144, E168, and H354 each coordinate Zn(2+).

The protein belongs to the peptidase M20A family. ArgE subfamily. In terms of assembly, homodimer. Requires Zn(2+) as cofactor. It depends on Co(2+) as a cofactor. Glutathione is required as a cofactor.

It localises to the cytoplasm. The enzyme catalyses N(2)-acetyl-L-ornithine + H2O = L-ornithine + acetate. Its pathway is amino-acid biosynthesis; L-arginine biosynthesis; L-ornithine from N(2)-acetyl-L-ornithine (linear): step 1/1. Its function is as follows. Catalyzes the hydrolysis of the amide bond of N(2)-acetylated L-amino acids. Cleaves the acetyl group from N-acetyl-L-ornithine to form L-ornithine, an intermediate in L-arginine biosynthesis pathway, and a branchpoint in the synthesis of polyamines. In Buchnera aphidicola subsp. Acyrthosiphon pisum (strain Tuc7), this protein is Acetylornithine deacetylase.